The sequence spans 217 residues: Adenylate kinase (217 aa).

10–15 is an ATP binding site; it reads GAGKGT. The interval 30-59 is NMP; it reads STGDMFRAAIKEGTELGLQAKSFMDQGALV. Residues Thr31, Arg36, 57-59, 85-88, and Gln92 each bind AMP; these read ALV and GFPR. An LID region spans residues 126-163; that stretch reads GRRICKTCGASYHLIFNPPAEEGKCDKDGGELYTRADD. Residue Arg127 participates in ATP binding. Residues Cys130 and Cys133 each contribute to the Zn(2+) site. 136–137 lines the ATP pocket; that stretch reads SY. The Zn(2+) site is built by Cys150 and Asp153. Residues Arg160 and Arg171 each contribute to the AMP site. Residue Gln199 coordinates ATP.

It belongs to the adenylate kinase family. As to quaternary structure, monomer.

It is found in the cytoplasm. It carries out the reaction AMP + ATP = 2 ADP. It participates in purine metabolism; AMP biosynthesis via salvage pathway; AMP from ADP: step 1/1. In terms of biological role, catalyzes the reversible transfer of the terminal phosphate group between ATP and AMP. Plays an important role in cellular energy homeostasis and in adenine nucleotide metabolism. The chain is Adenylate kinase from Lysinibacillus sphaericus (strain C3-41).